Consider the following 197-residue polypeptide: Ribonuclease HII (197 aa).

The RNase H type-2 domain maps to 9-197; sequence ELIAGVDEVG…APVKKALEQF (189 aa). A divalent metal cation contacts are provided by Asp-15, Glu-16, and Asp-107.

This sequence belongs to the RNase HII family. Mn(2+) is required as a cofactor. Requires Mg(2+) as cofactor.

It localises to the cytoplasm. The enzyme catalyses Endonucleolytic cleavage to 5'-phosphomonoester.. In terms of biological role, endonuclease that specifically degrades the RNA of RNA-DNA hybrids. The chain is Ribonuclease HII from Haemophilus influenzae (strain PittGG).